We begin with the raw amino-acid sequence, 544 residues long: Chaperonin GroEL (544 aa).

Residues 29–32 (TLGP), 86–90 (DGTTT), Gly413, 476–478 (NAL), and Asp492 each bind ATP.

This sequence belongs to the chaperonin (HSP60) family. As to quaternary structure, forms a cylinder of 14 subunits composed of two heptameric rings stacked back-to-back. Interacts with the co-chaperonin GroES.

The protein resides in the cytoplasm. The catalysed reaction is ATP + H2O + a folded polypeptide = ADP + phosphate + an unfolded polypeptide.. Together with its co-chaperonin GroES, plays an essential role in assisting protein folding. The GroEL-GroES system forms a nano-cage that allows encapsulation of the non-native substrate proteins and provides a physical environment optimized to promote and accelerate protein folding. In Desulfitobacterium hafniense (strain Y51), this protein is Chaperonin GroEL.